Here is a 263-residue protein sequence, read N- to C-terminus: L-aspartate dehydrogenase (263 aa).

Positions 120 and 186 each coordinate NAD(+). Histidine 216 is an active-site residue.

The protein belongs to the L-aspartate dehydrogenase family.

The enzyme catalyses L-aspartate + NADP(+) + H2O = oxaloacetate + NH4(+) + NADPH + H(+). It catalyses the reaction L-aspartate + NAD(+) + H2O = oxaloacetate + NH4(+) + NADH + H(+). Its pathway is cofactor biosynthesis; NAD(+) biosynthesis; iminoaspartate from L-aspartate (dehydrogenase route): step 1/1. In terms of biological role, specifically catalyzes the NAD or NADP-dependent dehydrogenation of L-aspartate to iminoaspartate. The sequence is that of L-aspartate dehydrogenase from Acinetobacter baylyi (strain ATCC 33305 / BD413 / ADP1).